The chain runs to 151 residues: Deoxyuridine 5'-triphosphate nucleotidohydrolase (151 aa).

Residues 70–72, N83, 87–89, and M97 each bind substrate; these read RSG and LID.

This sequence belongs to the dUTPase family. In terms of assembly, homotrimer. The cofactor is Mg(2+).

It catalyses the reaction dUTP + H2O = dUMP + diphosphate + H(+). The protein operates within pyrimidine metabolism; dUMP biosynthesis; dUMP from dCTP (dUTP route): step 2/2. In terms of biological role, this enzyme is involved in nucleotide metabolism: it produces dUMP, the immediate precursor of thymidine nucleotides and it decreases the intracellular concentration of dUTP so that uracil cannot be incorporated into DNA. The chain is Deoxyuridine 5'-triphosphate nucleotidohydrolase from Escherichia fergusonii (strain ATCC 35469 / DSM 13698 / CCUG 18766 / IAM 14443 / JCM 21226 / LMG 7866 / NBRC 102419 / NCTC 12128 / CDC 0568-73).